A 397-amino-acid polypeptide reads, in one-letter code: Acetate kinase (397 aa).

A Mg(2+)-binding site is contributed by N8. K15 contacts ATP. R92 contributes to the substrate binding site. The active-site Proton donor/acceptor is the D149. Residues H209–G213, D283–R285, and G331–N335 each bind ATP. Residue E385 participates in Mg(2+) binding.

Belongs to the acetokinase family. Homodimer. Mg(2+) is required as a cofactor. Requires Mn(2+) as cofactor.

It localises to the cytoplasm. It carries out the reaction acetate + ATP = acetyl phosphate + ADP. It functions in the pathway metabolic intermediate biosynthesis; acetyl-CoA biosynthesis; acetyl-CoA from acetate: step 1/2. Catalyzes the formation of acetyl phosphate from acetate and ATP. Can also catalyze the reverse reaction. This Corynebacterium glutamicum (strain ATCC 13032 / DSM 20300 / JCM 1318 / BCRC 11384 / CCUG 27702 / LMG 3730 / NBRC 12168 / NCIMB 10025 / NRRL B-2784 / 534) protein is Acetate kinase.